A 195-amino-acid polypeptide reads, in one-letter code: ATP-dependent Clp protease proteolytic subunit (195 aa).

Ser-98 (nucleophile) is an active-site residue. The active site involves His-123.

Belongs to the peptidase S14 family. In terms of assembly, fourteen ClpP subunits assemble into 2 heptameric rings which stack back to back to give a disk-like structure with a central cavity, resembling the structure of eukaryotic proteasomes.

It localises to the cytoplasm. It catalyses the reaction Hydrolysis of proteins to small peptides in the presence of ATP and magnesium. alpha-casein is the usual test substrate. In the absence of ATP, only oligopeptides shorter than five residues are hydrolyzed (such as succinyl-Leu-Tyr-|-NHMec, and Leu-Tyr-Leu-|-Tyr-Trp, in which cleavage of the -Tyr-|-Leu- and -Tyr-|-Trp bonds also occurs).. Its function is as follows. Cleaves peptides in various proteins in a process that requires ATP hydrolysis. Has a chymotrypsin-like activity. Plays a major role in the degradation of misfolded proteins. The sequence is that of ATP-dependent Clp protease proteolytic subunit from Helicobacter pylori (strain J99 / ATCC 700824) (Campylobacter pylori J99).